Consider the following 856-residue polypeptide: Genome polyprotein (856 aa).

The Peptidase S30 domain occupies 141-284 (KLTESQMNHL…QGVLNSMVQF (144 aa)). Active-site for P1 proteinase activity residues include histidine 192, aspartate 201, and serine 235. Positions 592 to 594 (PTK) match the Involved in virions binding and aphid transmission motif. Residues 618–740 (LYIAKQGYCY…ESEIKHYRVG (123 aa)) form the Peptidase C6 domain. Active-site for helper component proteinase activity residues include cysteine 626 and histidine 699.

Belongs to the potyviridae genome polyprotein family. Genome polyprotein of potyviruses undergoes post-translational proteolytic processing by the main proteinase NIa-pro resulting in the production of at least ten individual proteins. The P1 proteinase and the HC-pro cleave only their respective C-termini autocatalytically. 6K1 is essential for proper proteolytic separation of P3 from CI.

The catalysed reaction is Hydrolyzes a Gly-|-Gly bond at its own C-terminus, commonly in the sequence -Tyr-Xaa-Val-Gly-|-Gly, in the processing of the potyviral polyprotein.. In terms of biological role, required for aphid transmission and also has proteolytic activity. Only cleaves a Gly-Gly dipeptide at its own C-terminus. Interacts with virions and aphid stylets. Acts as a suppressor of RNA-mediated gene silencing, also known as post-transcriptional gene silencing (PTGS), a mechanism of plant viral defense that limits the accumulation of viral RNAs. May have RNA-binding activity. This is Genome polyprotein from Potato virus Y (strain C) (PVY).